Reading from the N-terminus, the 248-residue chain is 3-deoxy-manno-octulosonate cytidylyltransferase (248 aa).

This sequence belongs to the KdsB family.

The protein resides in the cytoplasm. It carries out the reaction 3-deoxy-alpha-D-manno-oct-2-ulosonate + CTP = CMP-3-deoxy-beta-D-manno-octulosonate + diphosphate. Its pathway is nucleotide-sugar biosynthesis; CMP-3-deoxy-D-manno-octulosonate biosynthesis; CMP-3-deoxy-D-manno-octulosonate from 3-deoxy-D-manno-octulosonate and CTP: step 1/1. It functions in the pathway bacterial outer membrane biogenesis; lipopolysaccharide biosynthesis. Activates KDO (a required 8-carbon sugar) for incorporation into bacterial lipopolysaccharide in Gram-negative bacteria. In Salmonella paratyphi A (strain ATCC 9150 / SARB42), this protein is 3-deoxy-manno-octulosonate cytidylyltransferase.